We begin with the raw amino-acid sequence, 377 residues long: uncharacterized protein (377 aa).

The next 7 helical transmembrane spans lie at 21 to 41 (WLLA…LVLF), 66 to 86 (LVTF…FGLG), 163 to 183 (IGVL…GIVL), 197 to 217 (AILF…IAII), 236 to 256 (FYMG…YHIF), 292 to 312 (VNLI…FLIL), and 339 to 359 (IYFL…ELLF).

It is found in the cell membrane. This is an uncharacterized protein from Mycoplasma pneumoniae (strain ATCC 29342 / M129 / Subtype 1) (Mycoplasmoides pneumoniae).